A 261-amino-acid polypeptide reads, in one-letter code: Polyamine aminopropyltransferase (261 aa).

The PABS domain occupies methionine 1–serine 219. S-methyl-5'-thioadenosine contacts are provided by residues aspartate 96 and aspartate 124–glycine 125. Aspartate 142 serves as the catalytic Proton acceptor.

Belongs to the spermidine/spermine synthase family. In terms of assembly, homodimer or homotetramer.

The protein localises to the cytoplasm. The enzyme catalyses S-adenosyl 3-(methylsulfanyl)propylamine + putrescine = S-methyl-5'-thioadenosine + spermidine + H(+). Its pathway is amine and polyamine biosynthesis; spermidine biosynthesis; spermidine from putrescine: step 1/1. Its function is as follows. Catalyzes the irreversible transfer of a propylamine group from the amino donor S-adenosylmethioninamine (decarboxy-AdoMet) to putrescine (1,4-diaminobutane) to yield spermidine. The polypeptide is Polyamine aminopropyltransferase (Chromobacterium violaceum (strain ATCC 12472 / DSM 30191 / JCM 1249 / CCUG 213 / NBRC 12614 / NCIMB 9131 / NCTC 9757 / MK)).